A 342-amino-acid chain; its full sequence is Anthranilate phosphoribosyltransferase (342 aa).

Residues G83, 86–87 (GD), T91, 93–96 (NIST), 111–119 (KHGGRSVSS), and S123 each bind 5-phospho-alpha-D-ribose 1-diphosphate. An anthranilate-binding site is contributed by G83. S95 contacts Mg(2+). An anthranilate-binding site is contributed by R169. Mg(2+) contacts are provided by D228 and E229.

Belongs to the anthranilate phosphoribosyltransferase family. In terms of assembly, homodimer. The cofactor is Mg(2+).

The catalysed reaction is N-(5-phospho-beta-D-ribosyl)anthranilate + diphosphate = 5-phospho-alpha-D-ribose 1-diphosphate + anthranilate. It functions in the pathway amino-acid biosynthesis; L-tryptophan biosynthesis; L-tryptophan from chorismate: step 2/5. Catalyzes the transfer of the phosphoribosyl group of 5-phosphorylribose-1-pyrophosphate (PRPP) to anthranilate to yield N-(5'-phosphoribosyl)-anthranilate (PRA). The sequence is that of Anthranilate phosphoribosyltransferase from Laribacter hongkongensis (strain HLHK9).